Consider the following 399-residue polypeptide: Dual-specificity RNA methyltransferase RlmN (399 aa).

The active-site Proton acceptor is the Glu-122. In terms of domain architecture, Radical SAM core spans 128–371 (ETDRGTLCVS…VRTPRGRDIL (244 aa)). Cys-135 and Cys-374 are disulfide-bonded. [4Fe-4S] cluster is bound by residues Cys-142, Cys-146, and Cys-149. S-adenosyl-L-methionine is bound by residues 200–201 (GE), Ser-232, 254–256 (SLH), and Asn-331. Cys-374 (S-methylcysteine intermediate) is an active-site residue.

It belongs to the radical SAM superfamily. RlmN family. It depends on [4Fe-4S] cluster as a cofactor.

The protein resides in the cytoplasm. The enzyme catalyses adenosine(2503) in 23S rRNA + 2 reduced [2Fe-2S]-[ferredoxin] + 2 S-adenosyl-L-methionine = 2-methyladenosine(2503) in 23S rRNA + 5'-deoxyadenosine + L-methionine + 2 oxidized [2Fe-2S]-[ferredoxin] + S-adenosyl-L-homocysteine. The catalysed reaction is adenosine(37) in tRNA + 2 reduced [2Fe-2S]-[ferredoxin] + 2 S-adenosyl-L-methionine = 2-methyladenosine(37) in tRNA + 5'-deoxyadenosine + L-methionine + 2 oxidized [2Fe-2S]-[ferredoxin] + S-adenosyl-L-homocysteine. Functionally, specifically methylates position 2 of adenine 2503 in 23S rRNA and position 2 of adenine 37 in tRNAs. m2A2503 modification seems to play a crucial role in the proofreading step occurring at the peptidyl transferase center and thus would serve to optimize ribosomal fidelity. The sequence is that of Dual-specificity RNA methyltransferase RlmN from Rhodopseudomonas palustris (strain BisB18).